Consider the following 473-residue polypeptide: Poly(A) polymerase catalytic subunit (473 aa).

Active-site residues include Asp193 and Asp195.

It belongs to the poxviridae poly(A) polymerase catalytic subunit family. As to quaternary structure, heterodimer of a large (catalytic) subunit and a small (regulatory) subunit.

The catalysed reaction is RNA(n) + ATP = RNA(n)-3'-adenine ribonucleotide + diphosphate. In terms of biological role, polymerase that creates the 3'-poly(A) tail of mRNA's. The protein is Poly(A) polymerase catalytic subunit (PAPL) of Crocodylus johnstoni (Australian freshwater crocodile).